The chain runs to 1281 residues: Tubulin polyglutamylase TTLL5 (1281 aa).

The 346-residue stretch at 62-407 folds into the TTL domain; it reads RYHLSYKIVR…VCQDPAQRAS (346 aa). ATP-binding positions include Lys-180, 186–187, 208–211, and 221–223; these read RG, SRYI, and KFD. A protein is bound at residue Arg-186. Arg-247 lines the L-glutamate pocket. An ATP-binding site is contributed by 268–269; the sequence is TN. L-glutamate contacts are provided by Tyr-270, Ser-271, and Lys-293. Asp-353, Glu-366, and Asn-368 together coordinate Mg(2+). Residues 378-488 are c-MTBD region; it reads PLDLKIKASM…RGGFIRIFPT (111 aa). Lys-384 is an L-glutamate binding site. Disordered stretches follow at residues 577–614, 1072–1114, and 1199–1281; these read MNVK…LREN, SASA…LQTG, and SSAT…HTKI. The segment covering 584–604 has biased composition (acidic residues); it reads ESEEEEEVALDNEDEEQEASQ. Composition is skewed to polar residues over residues 1086 to 1113, 1199 to 1212, 1240 to 1263, and 1270 to 1281; these read SGPT…SLQT, SSAT…TTLP, ATSQ…SSLN, and ITSSTDPAHTKI.

It belongs to the tubulin--tyrosine ligase family. As to quaternary structure, interacts with the transcriptional coactivators NCOA1/SRC-1 and NCOA2/TIF2. The cofactor is Mg(2+). As to expression, expressed in the retina, found in the rod and cone photoreceptors (at protein level). Widely expressed with highest levels in heart and skeletal muscle and low levels in other tissues.

Its subcellular location is the cell projection. The protein resides in the cilium. The protein localises to the cytoplasm. It is found in the cytoskeleton. It localises to the cilium basal body. Its subcellular location is the nucleus. The enzyme catalyses L-glutamyl-[protein] + L-glutamate + ATP = gamma-L-glutamyl-L-glutamyl-[protein] + ADP + phosphate + H(+). It catalyses the reaction (L-glutamyl)(n)-gamma-L-glutamyl-L-glutamyl-[protein] + L-glutamate + ATP = (L-glutamyl)(n+1)-gamma-L-glutamyl-L-glutamyl-[protein] + ADP + phosphate + H(+). In terms of biological role, polyglutamylase which modifies tubulin, generating polyglutamate side chains on the gamma-carboxyl group of specific glutamate residues within the C-terminal tail of tubulin. Preferentially mediates ATP-dependent initiation step of the polyglutamylation reaction over the elongation step. Preferentially modifies the alpha-tubulin tail over a beta-tail. Required for CCSAP localization to both polyglutamylated spindle and cilia microtubules. Increases the effects of transcriptional coactivator NCOA2/TIF2 in glucocorticoid receptor-mediated repression and induction and in androgen receptor-mediated induction. In Homo sapiens (Human), this protein is Tubulin polyglutamylase TTLL5.